The chain runs to 1059 residues: Putative ATP-dependent RNA helicase BoYb (1059 aa).

A Q motif motif is present at residues 54–82 (RRFAEVSLLPDILETMRNLGLNRLLRLQS). The Helicase ATP-binding domain occupies 87 to 284 (HLAGGSGHGA…RAVNDKPALV (198 aa)). Residue 100 to 107 (GSPASGRT) participates in ATP binding. Positions 230–233 (DDVD) match the DEAD box motif. In terms of domain architecture, Tudor spans 575–639 (PPVAGAICMY…GKLFECPEAL (65 aa)). The disordered stretch occupies residues 756–787 (VQDSKEKANSKPHEKMKGKMTDQPAKLQSQPP). Residues 757–775 (QDSKEKANSKPHEKMKGKM) are compositionally biased toward basic and acidic residues.

It localises to the cytoplasm. It catalyses the reaction ATP + H2O = ADP + phosphate + H(+). Functionally, involved in primary piRNA biogenesis in germline cells. In Drosophila melanogaster (Fruit fly), this protein is Putative ATP-dependent RNA helicase BoYb (BoYb).